The sequence spans 589 residues: L-fucose isomerase (589 aa).

Residues E340 and D364 each act as proton acceptor in the active site. Positions 340, 364, and 527 each coordinate Mn(2+).

This sequence belongs to the L-fucose isomerase family. Mn(2+) serves as cofactor.

The protein localises to the cytoplasm. It carries out the reaction L-fucose = L-fuculose. It participates in carbohydrate degradation; L-fucose degradation; L-lactaldehyde and glycerone phosphate from L-fucose: step 1/3. Its function is as follows. Converts the aldose L-fucose into the corresponding ketose L-fuculose. The protein is L-fucose isomerase of Haemophilus influenzae (strain PittEE).